A 436-amino-acid chain; its full sequence is Xylose isomerase (436 aa).

Residues His100 and Asp103 contribute to the active site. Residues Glu231, Glu267, His270, Asp295, Asp306, Asp308, and Asp338 each coordinate Mg(2+).

This sequence belongs to the xylose isomerase family. In terms of assembly, homotetramer. Mg(2+) serves as cofactor.

The protein localises to the cytoplasm. It carries out the reaction alpha-D-xylose = alpha-D-xylulofuranose. This is Xylose isomerase from Rhizobium johnstonii (strain DSM 114642 / LMG 32736 / 3841) (Rhizobium leguminosarum bv. viciae).